The chain runs to 202 residues: Glycerol-3-phosphate acyltransferase (202 aa).

Helical transmembrane passes span Met2–Ile22, Phe54–Leu74, Phe85–Tyr105, Val120–Leu140, Lys141–Ser161, and Leu162–Ile182.

This sequence belongs to the PlsY family. Probably interacts with PlsX.

Its subcellular location is the cell membrane. It catalyses the reaction an acyl phosphate + sn-glycerol 3-phosphate = a 1-acyl-sn-glycero-3-phosphate + phosphate. It participates in lipid metabolism; phospholipid metabolism. In terms of biological role, catalyzes the transfer of an acyl group from acyl-phosphate (acyl-PO(4)) to glycerol-3-phosphate (G3P) to form lysophosphatidic acid (LPA). This enzyme utilizes acyl-phosphate as fatty acyl donor, but not acyl-CoA or acyl-ACP. The chain is Glycerol-3-phosphate acyltransferase from Staphylococcus aureus (strain Mu3 / ATCC 700698).